The primary structure comprises 97 residues: YcgL domain-containing protein PFLU_1517 (97 aa).

The YcgL domain occupies 3–87 (RICSIYRSKK…AEDEYIEHLP (85 aa)).

This is YcgL domain-containing protein PFLU_1517 from Pseudomonas fluorescens (strain SBW25).